We begin with the raw amino-acid sequence, 779 residues long: Lon protease (779 aa).

Residues 7–190 (VPVLFLNDSI…LLIGWTGDHL (184 aa)) form the Lon N-terminal domain. Position 352 to 359 (352 to 359 (GPPGVGKT)) interacts with ATP. The 181-residue stretch at 589–769 (TAVPGVATGL…ADIIAAALEP (181 aa)) folds into the Lon proteolytic domain. Residues serine 675 and lysine 718 contribute to the active site.

The protein belongs to the peptidase S16 family. In terms of assembly, homohexamer. Organized in a ring with a central cavity. Oligomerization is Mg(2+)-dependent.

It is found in the cytoplasm. The catalysed reaction is Hydrolysis of proteins in presence of ATP.. With respect to regulation, stimulated by unfolded protein. In terms of biological role, ATP-dependent serine protease that mediates the selective degradation of mutant and abnormal proteins as well as certain short-lived regulatory proteins. Required for cellular homeostasis and for survival from DNA damage and developmental changes induced by stress. Degrades polypeptides processively to yield small peptide fragments that are 5 to 10 amino acids long. Binds to DNA in a double-stranded, site-specific manner. The chain is Lon protease from Mycolicibacterium smegmatis (Mycobacterium smegmatis).